Here is a 156-residue protein sequence, read N- to C-terminus: ATP synthase subunit b (156 aa).

A helical transmembrane segment spans residues L7 to L29.

The protein belongs to the ATPase B chain family. F-type ATPases have 2 components, F(1) - the catalytic core - and F(0) - the membrane proton channel. F(1) has five subunits: alpha(3), beta(3), gamma(1), delta(1), epsilon(1). F(0) has three main subunits: a(1), b(2) and c(10-14). The alpha and beta chains form an alternating ring which encloses part of the gamma chain. F(1) is attached to F(0) by a central stalk formed by the gamma and epsilon chains, while a peripheral stalk is formed by the delta and b chains.

It is found in the cell inner membrane. In terms of biological role, f(1)F(0) ATP synthase produces ATP from ADP in the presence of a proton or sodium gradient. F-type ATPases consist of two structural domains, F(1) containing the extramembraneous catalytic core and F(0) containing the membrane proton channel, linked together by a central stalk and a peripheral stalk. During catalysis, ATP synthesis in the catalytic domain of F(1) is coupled via a rotary mechanism of the central stalk subunits to proton translocation. Functionally, component of the F(0) channel, it forms part of the peripheral stalk, linking F(1) to F(0). This is ATP synthase subunit b from Photobacterium profundum (strain SS9).